Here is a 235-residue protein sequence, read N- to C-terminus: MGQKVHPNGMRLGIIKSWNSIWFASKKEFSNYLDSDFKVRSYVKKKLIKASVSKVIIERLSKNIRVTIYTARPGIVIGKKGEDVEKLRIEIAKITGVPAQVNISEIRKPELDAKLVADNISSQLERRVMFRRAIKRSVQNAMRQGAKGIKIEVSGRLGGVEIARREWYREGRVPLHTLRANIEYNTSEAHTTYGIIGVKVWIFKGEILDGMLVVSNKKDKKPFISVKKVSQKYRK.

The 69-residue stretch at 39 to 107 (VRSYVKKKLI…PAQVNISEIR (69 aa)) folds into the KH type-2 domain.

It belongs to the universal ribosomal protein uS3 family. In terms of assembly, part of the 30S ribosomal subunit. Forms a tight complex with proteins S10 and S14.

Functionally, binds the lower part of the 30S subunit head. Binds mRNA in the 70S ribosome, positioning it for translation. The sequence is that of Small ribosomal subunit protein uS3 from Buchnera aphidicola subsp. Cinara cedri (strain Cc).